A 135-amino-acid chain; its full sequence is ATP synthase epsilon chain (135 aa).

A compositionally biased stretch (basic and acidic residues) spans 89-100 (SGKAEAELEKAK). A disordered region spans residues 89-114 (SGKAEAELEKAKNQLSQNKDQGNSPE). Polar residues predominate over residues 101 to 112 (NQLSQNKDQGNS).

It belongs to the ATPase epsilon chain family. In terms of assembly, F-type ATPases have 2 components, CF(1) - the catalytic core - and CF(0) - the membrane proton channel. CF(1) has five subunits: alpha(3), beta(3), gamma(1), delta(1), epsilon(1). CF(0) has three main subunits: a, b and c.

It localises to the cellular thylakoid membrane. Functionally, produces ATP from ADP in the presence of a proton gradient across the membrane. This Prochlorococcus marinus (strain NATL2A) protein is ATP synthase epsilon chain.